The chain runs to 92 residues: Long neurotoxin 3FTx-Oxy1 (92 aa).

An N-terminal signal peptide occupies residues 1–21 (MKTLLLTLVVVTIVCLDLGYT). Intrachain disulfides connect Cys24/Cys42, Cys35/Cys63, Cys48/Cys52, Cys67/Cys79, and Cys80/Cys85.

This sequence belongs to the three-finger toxin family. Long-chain subfamily. Type II alpha-neurotoxin sub-subfamily. In terms of tissue distribution, expressed by the venom gland.

Its subcellular location is the secreted. In terms of biological role, binds with high affinity to muscular (alpha-1/CHRNA1) and neuronal (alpha-7/CHRNA7) nicotinic acetylcholine receptor (nAChR) and inhibits acetylcholine from binding to the receptor, thereby impairing neuromuscular and neuronal transmission. This is Long neurotoxin 3FTx-Oxy1 from Oxyuranus microlepidotus (Inland taipan).